The sequence spans 182 residues: Large ribosomal subunit protein uL5 (182 aa).

It belongs to the universal ribosomal protein uL5 family. As to quaternary structure, part of the 50S ribosomal subunit; part of the 5S rRNA/L5/L18/L25 subcomplex. Contacts the 5S rRNA and the P site tRNA. Forms a bridge to the 30S subunit in the 70S ribosome.

Functionally, this is one of the proteins that bind and probably mediate the attachment of the 5S RNA into the large ribosomal subunit, where it forms part of the central protuberance. In the 70S ribosome it contacts protein S13 of the 30S subunit (bridge B1b), connecting the 2 subunits; this bridge is implicated in subunit movement. Contacts the P site tRNA; the 5S rRNA and some of its associated proteins might help stabilize positioning of ribosome-bound tRNAs. The polypeptide is Large ribosomal subunit protein uL5 (Thermosipho melanesiensis (strain DSM 12029 / CIP 104789 / BI429)).